The chain runs to 242 residues: Probable transcriptional regulatory protein Dred_1658 (242 aa).

This sequence belongs to the TACO1 family.

The protein resides in the cytoplasm. This is Probable transcriptional regulatory protein Dred_1658 from Desulforamulus reducens (strain ATCC BAA-1160 / DSM 100696 / MI-1) (Desulfotomaculum reducens).